Consider the following 426-residue polypeptide: MGGLPVSPKYVIKAKMEIKGSVEKHDIIGAIFGQAEGLLGSELDLRELQKTGRVGRIEVNTRSQDGTLVAEIEIPTNLDMAETAIIAATIESIDKVGPYPAKTEVVSIEDVRAEKRQKIIERAVELYKKLLESVPESRELVEEVLRRVRVAEIVEYGEEKLPGGPEVETSDTVILVEGRADVQNLLRHGYKNVIALGGATIPKSIKSLVENKKVILFVDGDRGGELIARNVINALKVDFVARAPPGREVEDLTAKEIARALQNKIPVDEFLQALEREKKQQKEVKAEIVVPPAKLIKSATKKNPEIAQEIVVPAEVYEKLEELKGTLEAVIYDENWQVVEKVPVRDLVNRLKEVERAAHVVLDGIITQRLVDVAYTKGLKSLIGVRIGEIIRKPDNIVLATFSSVKKSEENIQESVSTGESAQTSP.

Residues 171–245 form the Toprim domain; it reads DTVILVEGRA…KVDFVARAPP (75 aa). Positions 177, 219, and 221 each coordinate Mg(2+). The segment at 407–426 is disordered; that stretch reads KSEENIQESVSTGESAQTSP. The segment covering 413 to 426 has biased composition (polar residues); it reads QESVSTGESAQTSP.

Belongs to the archaeal DnaG primase family. Forms a ternary complex with MCM helicase and DNA. Component of the archaeal exosome complex. Mg(2+) serves as cofactor.

The catalysed reaction is ssDNA + n NTP = ssDNA/pppN(pN)n-1 hybrid + (n-1) diphosphate.. In terms of biological role, RNA polymerase that catalyzes the synthesis of short RNA molecules used as primers for DNA polymerase during DNA replication. Also part of the exosome, which is a complex involved in RNA degradation. Acts as a poly(A)-binding protein that enhances the interaction between heteromeric, adenine-rich transcripts and the exosome. The polypeptide is DNA primase DnaG (Thermofilum pendens (strain DSM 2475 / Hrk 5)).